The primary structure comprises 112 residues: MSTNIYDIANELERAIRNLPEYKAVEAVKVSVEGNSEAKEILESYISFQKEIQSKLQAGEIPTEADQKKMLDFNKKVQGNPLLTEYFSKQQQLGTYVADLERIIFKPLNELL.

It belongs to the UPF0342 family.

This chain is UPF0342 protein SSU05_1260, found in Streptococcus suis (strain 05ZYH33).